The sequence spans 400 residues: Enoyl-[acyl-carrier-protein] reductase [NADH] (400 aa).

Residues 48–53 (GSSSGY), 74–75 (FE), 111–112 (DA), and 139–140 (LA) contribute to the NAD(+) site. Tyr-225 serves as a coordination point for substrate. The Proton donor role is filled by Tyr-235. Residues Lys-244 and 273 to 275 (VVT) each bind NAD(+).

The protein belongs to the TER reductase family. Monomer.

The catalysed reaction is a 2,3-saturated acyl-[ACP] + NAD(+) = a (2E)-enoyl-[ACP] + NADH + H(+). Its pathway is lipid metabolism; fatty acid biosynthesis. Its function is as follows. Involved in the final reduction of the elongation cycle of fatty acid synthesis (FAS II). Catalyzes the reduction of a carbon-carbon double bond in an enoyl moiety that is covalently linked to an acyl carrier protein (ACP). The protein is Enoyl-[acyl-carrier-protein] reductase [NADH] of Shewanella denitrificans (strain OS217 / ATCC BAA-1090 / DSM 15013).